Reading from the N-terminus, the 725-residue chain is mRNA decay activator protein ZFP36L3 (725 aa).

Positions 1–25 are enriched in low complexity; sequence MANNNLNRPLNTNVADSSNSSSTPG. The disordered stretch occupies residues 1-119; the sequence is MANNNLNRPL…KVSGSSSLAT (119 aa). 2 stretches are compositionally biased toward polar residues: residues 42–72 and 100–119; these read APSS…QSGA and HSLQ…SLAT. C3H1-type zinc fingers lie at residues 122-150 and 160-188; these read RYKT…HGYR and KYKT…HNQP. A necessary for cytoplasmic localization region spans residues 193-711; the sequence is VLSESTLEEP…ESEFDNTNSS (519 aa). A disordered region spans residues 276 to 310; the sequence is STTAHDADKDPDKDADKDPSNNSANDALAFPQEPG. The segment covering 280-294 has biased composition (basic and acidic residues); it reads HDADKDPDKDADKDP. Helical transmembrane passes span 380–400, 420–440, 441–461, and 468–488; these read LAPA…AMAL, AALA…GAAM, APGA…MATG, and AAMA…GAAV. The segment at 686-709 is disordered; the sequence is DEDDFLRRSSSSSSLNESEFDNTN. The segment covering 693–702 has biased composition (low complexity); the sequence is RSSSSSSLNE.

In terms of tissue distribution, expressed in placenta and extraembryonic tissues (at protein level). Not detected in embryos and fetus.

The protein localises to the cytoplasm. It localises to the membrane. In terms of biological role, placenta-specific zinc-finger RNA-binding protein that destabilizes cytoplasmic AU-rich element (ARE)-containing mRNA transcripts by promoting their poly(A) tail removal or deadenylation, and hence provide a mechanism for attenuating protein synthesis. Binds to the 3'-UTR ARE of placental target mRNAs, such as TNF, HBEGF and LIPG. Involved in placental expression of many genes important for normal placental physiology. This is mRNA decay activator protein ZFP36L3 from Mus musculus (Mouse).